The chain runs to 677 residues: Methionine--tRNA ligase (677 aa).

The 'HIGH' region motif lies at 15–25; it reads PYANGSIHLGH. 4 residues coordinate Zn(2+): Cys-146, Cys-149, Cys-159, and Cys-162. The 'KMSKS' region motif lies at 333–337; that stretch reads KMSKS. Lys-336 is a binding site for ATP. One can recognise a tRNA-binding domain in the interval 575–677; that stretch reads DFAKVDLRVA…DGAKPGQQVK (103 aa).

This sequence belongs to the class-I aminoacyl-tRNA synthetase family. MetG type 1 subfamily. In terms of assembly, homodimer. The cofactor is Zn(2+).

The protein localises to the cytoplasm. The catalysed reaction is tRNA(Met) + L-methionine + ATP = L-methionyl-tRNA(Met) + AMP + diphosphate. Its function is as follows. Is required not only for elongation of protein synthesis but also for the initiation of all mRNA translation through initiator tRNA(fMet) aminoacylation. This Salmonella arizonae (strain ATCC BAA-731 / CDC346-86 / RSK2980) protein is Methionine--tRNA ligase.